The following is a 202-amino-acid chain: Ras-related protein Rab-18 (202 aa).

12 residues coordinate GTP: S20, G23, K24, S25, S26, D37, P38, T43, G69, K126, D128, and A155. The short motif at Q40–F48 is the Effector region element. The segment at R183–C202 is disordered. Over residues P191–C202 the composition is skewed to polar residues. S-geranylgeranyl cysteine attachment occurs at residues C200 and C202. C202 bears the Cysteine methyl ester mark.

The protein belongs to the small GTPase superfamily. Rab family.

The catalysed reaction is GTP + H2O = GDP + phosphate + H(+). In terms of biological role, the small GTPases Rab are key regulators of intracellular membrane trafficking, from the formation of transport vesicles to their fusion with membranes. Rabs cycle between an inactive GDP-bound form and an active GTP-bound form that is able to recruit to membranes different sets of downstream effectors directly responsible for vesicle formation, movement, tethering and fusion. Plays a role in apical endocytosis/recycling. May be implicated in transport between the plasma membrane and early endosomes. The chain is Ras-related protein Rab-18 (rab-18) from Caenorhabditis briggsae.